A 433-amino-acid chain; its full sequence is Bifunctional protein GlmU (433 aa).

A pyrophosphorylase region spans residues 1–226; that stretch reads MLSVIILAAG…EECFLGVNSQ (226 aa). UDP-N-acetyl-alpha-D-glucosamine contacts are provided by residues 7–10, lysine 21, and 80–81; these read LAAG and GT. Residue aspartate 106 coordinates Mg(2+). Residues glycine 138, glutamate 152, asparagine 167, and asparagine 224 each contribute to the UDP-N-acetyl-alpha-D-glucosamine site. Position 224 (asparagine 224) interacts with Mg(2+). The interval 227–247 is linker; it reads TERAKAEEIMLERLRKNAMDL. The N-acetyltransferase stretch occupies residues 248–433; that stretch reads GVVMQLPSSI…NGYFKFFKKP (186 aa). Arginine 311 and lysine 328 together coordinate UDP-N-acetyl-alpha-D-glucosamine. Histidine 339 (proton acceptor) is an active-site residue. Residues tyrosine 342 and asparagine 353 each contribute to the UDP-N-acetyl-alpha-D-glucosamine site. Residues alanine 356, 362–363, serine 381, serine 399, and arginine 416 each bind acetyl-CoA; that span reads NY.

The protein in the N-terminal section; belongs to the N-acetylglucosamine-1-phosphate uridyltransferase family. In the C-terminal section; belongs to the transferase hexapeptide repeat family. As to quaternary structure, homotrimer. The cofactor is Mg(2+).

It localises to the cytoplasm. The enzyme catalyses alpha-D-glucosamine 1-phosphate + acetyl-CoA = N-acetyl-alpha-D-glucosamine 1-phosphate + CoA + H(+). The catalysed reaction is N-acetyl-alpha-D-glucosamine 1-phosphate + UTP + H(+) = UDP-N-acetyl-alpha-D-glucosamine + diphosphate. It functions in the pathway nucleotide-sugar biosynthesis; UDP-N-acetyl-alpha-D-glucosamine biosynthesis; N-acetyl-alpha-D-glucosamine 1-phosphate from alpha-D-glucosamine 6-phosphate (route II): step 2/2. It participates in nucleotide-sugar biosynthesis; UDP-N-acetyl-alpha-D-glucosamine biosynthesis; UDP-N-acetyl-alpha-D-glucosamine from N-acetyl-alpha-D-glucosamine 1-phosphate: step 1/1. The protein operates within bacterial outer membrane biogenesis; LPS lipid A biosynthesis. Its function is as follows. Catalyzes the last two sequential reactions in the de novo biosynthetic pathway for UDP-N-acetylglucosamine (UDP-GlcNAc). The C-terminal domain catalyzes the transfer of acetyl group from acetyl coenzyme A to glucosamine-1-phosphate (GlcN-1-P) to produce N-acetylglucosamine-1-phosphate (GlcNAc-1-P), which is converted into UDP-GlcNAc by the transfer of uridine 5-monophosphate (from uridine 5-triphosphate), a reaction catalyzed by the N-terminal domain. The chain is Bifunctional protein GlmU from Helicobacter pylori (strain HPAG1).